A 175-amino-acid chain; its full sequence is Large ribosomal subunit protein uL10 (175 aa).

This sequence belongs to the universal ribosomal protein uL10 family. In terms of assembly, part of the ribosomal stalk of the 50S ribosomal subunit. The N-terminus interacts with L11 and the large rRNA to form the base of the stalk. The C-terminus forms an elongated spine to which L12 dimers bind in a sequential fashion forming a multimeric L10(L12)X complex.

Forms part of the ribosomal stalk, playing a central role in the interaction of the ribosome with GTP-bound translation factors. The chain is Large ribosomal subunit protein uL10 from Prochlorococcus marinus (strain MIT 9515).